A 264-amino-acid chain; its full sequence is Polyneuridine aldehyde esterase (264 aa).

Positions 1–6 are excised as a propeptide; sequence MHSAAN. An AB hydrolase-1 domain is found at 12-122; sequence HFVLVHGGCL…MMPDPNHSLT (111 aa). Residues serine 87, aspartate 216, and histidine 244 contribute to the active site. Serine 87 is a binding site for 16-epivellosimine.

It belongs to the AB hydrolase superfamily. In terms of assembly, homodimer; homodimerizes in aqueous solutions at pH 7.0. As to expression, mainly expressed in roots and, to a lower level, in leaves.

It catalyses the reaction polyneuridine aldehyde + H2O = 16-epivellosimine + methanol + CO2. It participates in alkaloid biosynthesis; ajmaline biosynthesis. Its activity is regulated as follows. Inhibited by DEPC and HgCl(2). Hydrolase involved in the biosynthesis of ajmaline-type monoterpenoid indole alkaloids (MIAs) natural products, important plant-derived pharmaceuticals used in the therapy of heart disorders. Catalyzes the hydrolysis of polyneuridine aldehyde into epi-vellosimine, precursor of vomilenine, an intermediate chemical in the biosynthesis of ajmaline. The protein is Polyneuridine aldehyde esterase of Rauvolfia serpentina (Serpentine wood).